The primary structure comprises 361 residues: Thermostable alkaline protease (361 aa).

The first 24 residues, 1 to 24 (MRQSLKVMVLSTVALLFMANPAAA), serve as a signal peptide directing secretion. Residues 25 to 93 (SEEKKEYLIV…IEKNAEVTIS (69 aa)) constitute a propeptide that is removed on maturation. Gln94 provides a ligand contact to Ca(2+). One can recognise a Peptidase S8 domain in the interval 97-360 (PWGISFINTQ…NGLVHAGRAT (264 aa)). Residue Asp124 is the Charge relay system of the active site. Asp132 is a binding site for Ca(2+). His154 acts as the Charge relay system in catalysis. The Ca(2+) site is built by Leu165, Asn167, Ile169, Val171, Ala255, Tyr257, and Val260. The active-site Charge relay system is Ser307.

The protein belongs to the peptidase S8 family. The cofactor is Ca(2+).

It is found in the secreted. Its function is as follows. Shows keratinolytic activity. The polypeptide is Thermostable alkaline protease (Halalkalibacterium halodurans (strain ATCC BAA-125 / DSM 18197 / FERM 7344 / JCM 9153 / C-125) (Bacillus halodurans)).